The primary structure comprises 111 residues: Nucleoid-associated protein Cag_1190 (111 aa).

The protein belongs to the YbaB/EbfC family. In terms of assembly, homodimer.

It localises to the cytoplasm. The protein resides in the nucleoid. Binds to DNA and alters its conformation. May be involved in regulation of gene expression, nucleoid organization and DNA protection. In Chlorobium chlorochromatii (strain CaD3), this protein is Nucleoid-associated protein Cag_1190.